A 1309-amino-acid polypeptide reads, in one-letter code: Angiotensin-converting enzyme (1309 aa).

The first 33 residues, 1–33 (MGAASGCRWPWPPLLPLLLMLLLPPPPLPVALA), serve as a signal peptide directing secretion. The Extracellular segment spans residues 34–1259 (LDSALQPGNF…GLNLEEQQAR (1226 aa)). N-linked (GlcNAc...) asparagine glycans are attached at residues Asn-42, Asn-58, Asn-78, Asn-115, Asn-135, Asn-150, and Asn-164. Peptidase M2 domains are found at residues 44–627 (TADE…LGWP) and 646–1225 (VSDE…LGWP). A disulfide bridge connects residues Cys-161 and Cys-169. Tyr-235 provides a ligand contact to chloride. A glycan (N-linked (GlcNAc...) asparagine) is linked at Asn-322. The cysteines at positions 363 and 381 are disulfide-linked. His-394 lines the Zn(2+) pocket. Glu-395 serves as the catalytic Proton acceptor 1. Zn(2+)-binding residues include His-398 and Glu-422. Asn-512 is a glycosylation site (N-linked (GlcNAc...) asparagine). Residue His-523 is the Proton donor 1 of the active site. Residue Asn-526 is glycosylated (N-linked (GlcNAc...) asparagine). Residue Arg-532 participates in chloride binding. A disulfide bridge links Cys-548 with Cys-560. 4 N-linked (GlcNAc...) asparagine glycosylation sites follow: Asn-680, Asn-698, Asn-717, and Asn-763. Cys-760 and Cys-766 are oxidised to a cystine. 2 residues coordinate chloride: Arg-794 and Tyr-832. Residue Asn-945 is glycosylated (N-linked (GlcNAc...) asparagine). A disulfide bridge connects residues Cys-960 and Cys-978. Position 991 (His-991) interacts with Zn(2+). The active-site Proton acceptor 2 is Glu-992. The Zn(2+) site is built by His-995 and Glu-1019. Trp-1093 and Arg-1097 together coordinate chloride. His-1121 acts as the Proton donor 2 in catalysis. Residue Arg-1130 participates in chloride binding. Cys-1146 and Cys-1158 are disulfide-bonded. N-linked (GlcNAc...) asparagine glycans are attached at residues Asn-1194 and Asn-1228. A juxtamembrane stalk region spans residues 1218–1259 (HGEKLGWPQYNWTPNSARLEGSFAGTGRVNFLGLNLEEQQAR). Residues 1260-1280 (VGQWVLLFLGVTLLVATMGLT) traverse the membrane as a helical segment. At 1281–1309 (QRLFSIRHQILRRTHRGPQFGSEVELRHS) the chain is on the cytoplasmic side. Ser-1302 carries the post-translational modification Phosphoserine.

This sequence belongs to the peptidase M2 family. As to quaternary structure, monomer and homodimer; homodimerizes following binding to an inhibitor. Interacts with calmodulin (CALM1, CALM2 or CALM3); interaction takes place in the cytoplasmic region and regulates phosphorylation and proteolytic cleavage. Requires Zn(2+) as cofactor. Chloride serves as cofactor. In terms of processing, produced following proteolytic cleavage by secretase enzymes that cleave the transmembrane form in the juxtamembrane stalk region upstream of the transmembrane region. Cleavage can take place at different sites of the juxtamembrane stalk region. Phosphorylated by CK2 on Ser-1302; which allows membrane retention. Phosphorylated on tyrosine residues on its extracellular part, promoting cleavage by secretase enzymes and formation of the soluble form (Angiotensin-converting enzyme, soluble form).

It is found in the cell membrane. The protein resides in the cytoplasm. Its subcellular location is the secreted. It catalyses the reaction Release of a C-terminal dipeptide, oligopeptide-|-Xaa-Yaa, when Xaa is not Pro, and Yaa is neither Asp nor Glu. Thus, conversion of angiotensin I to angiotensin II, with increase in vasoconstrictor activity, but no action on angiotensin II.. The catalysed reaction is angiotensin I + H2O = L-histidyl-L-leucine + angiotensin II. It carries out the reaction bradykinin + H2O = L-Phe-L-Arg + bradykinin(1-7). The enzyme catalyses substance P + H2O = substance P(1-9) + L-Leu-L-Met-NH2. It catalyses the reaction substance P + H2O = substance P(1-8) + Gly-L-Leu-L-Met-NH2. The catalysed reaction is substance P + H2O = L-Phe-L-Phe-Gly-L-Leu-L-Met-NH2 + substance P(1-6). It carries out the reaction neurotensin + H2O = neurotensin(1-11) + L-isoleucyl-L-leucine. The enzyme catalyses goralatide + H2O = N-acetyl-L-seryl-L-aspartate + L-lysyl-L-proline. It catalyses the reaction Met-enkephalin + H2O = L-phenylalanyl-L-methionine + L-tyrosylglycylglycine. The catalysed reaction is Leu-enkephalin + H2O = L-tyrosylglycylglycine + L-phenylalanyl-L-leucine. It carries out the reaction Met-enkephalin-Arg-Phe + H2O = L-arginyl-L-phenylalanine + Met-enkephalin. Its activity is regulated as follows. The dipeptidyl carboxypeptidase activity is strongly activated by chloride. The dipeptidyl carboxypeptidase activity is specifically inhibited by lisinopril, captopril and enalaprilat. Its function is as follows. Dipeptidyl carboxypeptidase that removes dipeptides from the C-terminus of a variety of circulating hormones, such as angiotensin I, bradykinin or enkephalins, thereby playing a key role in the regulation of blood pressure, electrolyte homeostasis or synaptic plasticity. Composed of two similar catalytic domains, each possessing a functional active site, with different selectivity for substrates. Plays a major role in the angiotensin-renin system that regulates blood pressure and sodium retention by the kidney by converting angiotensin I to angiotensin II, resulting in an increase of the vasoconstrictor activity of angiotensin. Also able to inactivate bradykinin, a potent vasodilator, and therefore enhance the blood pressure response. Acts as a regulator of synaptic transmission by mediating cleavage of neuropeptide hormones, such as substance P, neurotensin or enkephalins. Catalyzes degradation of different enkephalin neuropeptides (Met-enkephalin, Leu-enkephalin, Met-enkephalin-Arg-Phe and possibly Met-enkephalin-Arg-Gly-Leu). Acts as a regulator of synaptic plasticity in the nucleus accumbens of the brain by mediating cleavage of Met-enkephalin-Arg-Phe, a strong ligand of Mu-type opioid receptor OPRM1, into Met-enkephalin. Met-enkephalin-Arg-Phe cleavage by ACE decreases activation of OPRM1, leading to long-term synaptic potentiation of glutamate release. Also acts as a regulator of hematopoietic stem cell differentiation by mediating degradation of hemoregulatory peptide N-acetyl-SDKP (AcSDKP). Acts as a regulator of cannabinoid signaling pathway by mediating degradation of hemopressin, an antagonist peptide of the cannabinoid receptor CNR1. Involved in amyloid-beta metabolism by catalyzing degradation of Amyloid-beta protein 40 and Amyloid-beta protein 42 peptides, thereby preventing plaque formation. Catalyzes cleavage of cholecystokinin (maturation of Cholecystokinin-8 and Cholecystokinin-5) and Gonadoliberin-1 (both maturation and degradation) hormones. Degradation of hemoregulatory peptide N-acetyl-SDKP (AcSDKP) and amyloid-beta proteins is mediated by the N-terminal catalytic domain, while angiotensin I and cholecystokinin cleavage is mediated by the C-terminal catalytic region. Soluble form that is released in blood plasma and other body fluids following proteolytic cleavage in the juxtamembrane stalk region. In Sus scrofa (Pig), this protein is Angiotensin-converting enzyme.